The sequence spans 421 residues: Enolase (421 aa).

Gln-162 contributes to the (2R)-2-phosphoglycerate binding site. Glu-204 acts as the Proton donor in catalysis. The Mg(2+) site is built by Asp-241, Glu-284, and Asp-311. Lys-336, Arg-365, Ser-366, and Lys-387 together coordinate (2R)-2-phosphoglycerate. The Proton acceptor role is filled by Lys-336.

The protein belongs to the enolase family. The cofactor is Mg(2+).

It is found in the cytoplasm. It localises to the secreted. The protein localises to the cell surface. The enzyme catalyses (2R)-2-phosphoglycerate = phosphoenolpyruvate + H2O. Its pathway is carbohydrate degradation; glycolysis; pyruvate from D-glyceraldehyde 3-phosphate: step 4/5. Functionally, catalyzes the reversible conversion of 2-phosphoglycerate (2-PG) into phosphoenolpyruvate (PEP). It is essential for the degradation of carbohydrates via glycolysis. This is Enolase from Nitratiruptor sp. (strain SB155-2).